Reading from the N-terminus, the 808-residue chain is Phenylalanine--tRNA ligase beta subunit (808 aa).

In terms of domain architecture, tRNA-binding spans 40–149; that stretch reads RPELDFVKIV…DQAEVGKTIR (110 aa). Positions 407 to 484 constitute a B5 domain; the sequence is HKEVRIHTDI…RTKGYDTIQV (78 aa). The Mg(2+) site is built by Asp-462, Asp-468, Glu-471, and Glu-472. One can recognise an FDX-ACB domain in the interval 716-808; that stretch reads SQFPEAEIDL…LAGKNGFVLR (93 aa).

The protein belongs to the phenylalanyl-tRNA synthetase beta subunit family. Type 1 subfamily. As to quaternary structure, tetramer of two alpha and two beta subunits. The cofactor is Mg(2+).

Its subcellular location is the cytoplasm. It carries out the reaction tRNA(Phe) + L-phenylalanine + ATP = L-phenylalanyl-tRNA(Phe) + AMP + diphosphate + H(+). The polypeptide is Phenylalanine--tRNA ligase beta subunit (Leptospira interrogans serogroup Icterohaemorrhagiae serovar Lai (strain 56601)).